A 305-amino-acid polypeptide reads, in one-letter code: Homoserine O-acetyltransferase (305 aa).

Cysteine 142 serves as the catalytic Acyl-thioester intermediate. Substrate contacts are provided by lysine 163 and serine 192. Histidine 235 acts as the Proton acceptor in catalysis. Glutamate 237 is a catalytic residue. Position 249 (arginine 249) interacts with substrate.

Belongs to the MetA family.

Its subcellular location is the cytoplasm. It catalyses the reaction L-homoserine + acetyl-CoA = O-acetyl-L-homoserine + CoA. It functions in the pathway amino-acid biosynthesis; L-methionine biosynthesis via de novo pathway; O-acetyl-L-homoserine from L-homoserine: step 1/1. Functionally, transfers an acetyl group from acetyl-CoA to L-homoserine, forming acetyl-L-homoserine. The polypeptide is Homoserine O-acetyltransferase (Bacteroides fragilis (strain ATCC 25285 / DSM 2151 / CCUG 4856 / JCM 11019 / LMG 10263 / NCTC 9343 / Onslow / VPI 2553 / EN-2)).